The sequence spans 246 residues: Mitochondrial inner membrane protease ATP23 homolog (246 aa).

H125 contacts a divalent metal cation. E126 is an active-site residue. Position 129 (H129) interacts with a divalent metal cation.

Belongs to the peptidase M76 family. Interacts with XRCC6.

The protein is Mitochondrial inner membrane protease ATP23 homolog of Homo sapiens (Human).